Reading from the N-terminus, the 496-residue chain is Probable zinc metalloprotease SNOG_06590 (496 aa).

The N-terminal stretch at 1-20 (MRSSMFFAVCAAAALQTALS) is a signal peptide. N-linked (GlcNAc...) asparagine glycosylation occurs at Asn138. Residues His161, Asp181, and Glu226 each coordinate Zn(2+). A glycan (N-linked (GlcNAc...) asparagine) is linked at Asn241. Asp253 serves as a coordination point for Zn(2+). Residues Asn282, Asn361, Asn409, Asn415, and Asn457 are each glycosylated (N-linked (GlcNAc...) asparagine). A Fibronectin type-III domain is found at 402–496 (EPMNVGINTT…PFPFGCTRNC (95 aa)).

Belongs to the peptidase M28 family. M28B subfamily. It depends on Zn(2+) as a cofactor.

It localises to the secreted. The protein is Probable zinc metalloprotease SNOG_06590 of Phaeosphaeria nodorum (strain SN15 / ATCC MYA-4574 / FGSC 10173) (Glume blotch fungus).